Here is a 249-residue protein sequence, read N- to C-terminus: 5'-nucleotidase SurE (249 aa).

A divalent metal cation is bound by residues aspartate 8, aspartate 9, serine 39, and asparagine 91.

It belongs to the SurE nucleotidase family. A divalent metal cation serves as cofactor.

It localises to the cytoplasm. It carries out the reaction a ribonucleoside 5'-phosphate + H2O = a ribonucleoside + phosphate. Its function is as follows. Nucleotidase that shows phosphatase activity on nucleoside 5'-monophosphates. This is 5'-nucleotidase SurE from Vesicomyosocius okutanii subsp. Calyptogena okutanii (strain HA).